The primary structure comprises 434 residues: Glutamate-1-semialdehyde 2,1-aminomutase (434 aa).

Lysine 271 is subject to N6-(pyridoxal phosphate)lysine.

Belongs to the class-III pyridoxal-phosphate-dependent aminotransferase family. HemL subfamily. In terms of assembly, homodimer. Requires pyridoxal 5'-phosphate as cofactor.

It localises to the cytoplasm. The catalysed reaction is (S)-4-amino-5-oxopentanoate = 5-aminolevulinate. Its pathway is porphyrin-containing compound metabolism; protoporphyrin-IX biosynthesis; 5-aminolevulinate from L-glutamyl-tRNA(Glu): step 2/2. It participates in porphyrin-containing compound metabolism; chlorophyll biosynthesis. This is Glutamate-1-semialdehyde 2,1-aminomutase from Prochlorococcus marinus (strain MIT 9312).